The sequence spans 37 residues: Photosystem II reaction center protein Psb30 (37 aa).

A helical transmembrane segment spans residues 10-30; that stretch reads LISLLLLTLIMLAGPAVIALW.

Belongs to the Psb30/Ycf12 family. In terms of assembly, PSII is composed of 1 copy each of membrane proteins PsbA, PsbB, PsbC, PsbD, PsbE, PsbF, PsbH, PsbI, PsbJ, PsbK, PsbL, PsbM, PsbT, PsbX, Psb30/Ycf12, peripheral proteins PsbO, CyanoQ (PsbQ), PsbU, PsbV and a large number of cofactors. It forms dimeric complexes.

The protein resides in the cell inner membrane. Its function is as follows. A core subunit of photosystem II (PSII), probably helps stabilize the reaction center. This Gloeobacter violaceus (strain ATCC 29082 / PCC 7421) protein is Photosystem II reaction center protein Psb30.